The primary structure comprises 413 residues: MIKKLILDPKNVSIIKNGIRNYSKSKSFIQPITTLSEEETLLKETVANFANEKVRPLVKVMDETSELNKGLLKDLFDMNLMGIDISDSYGGANMNFMGSIIAIEELAKVDPAISVIVDVQNTLVNNCINRYGSIQQREKYLSMLATNTVGSFCLSESGSGSDAFALATRAVRQSDGTFVLNGTKQWITNAKEAGVFIVMANVDPSQGYKGITAFIVESNNPGLRIGKKEDKLGIRASSTCEVILDNCVVKPTDILGELGRGYKIAIEGLNEGRIGIAAQMLGLAQGVFDSTIPYLMERKQFGKPIATFQGMQFTYADLAVDIEAGRLLTYNAARIKEAGLPFVFQASMAKLHCSRVAEKAASACISMLGGVGFTKEFPAEKFFRDSKVGQIYEGTSNIQLQTIAKEIVKNFNK.

Residues 152 to 161 (FCLSESGSGS) and 186 to 188 (WIT) contribute to the FAD site. Position 161 (S161) interacts with substrate. Substrate is bound by residues Y208, Y262, and 270-273 (NEGR). FAD-binding positions include R298, Q309, and 366–370 (SMLGG). Catalysis depends on E393, which acts as the Proton acceptor. FAD is bound at residue 395–397 (TSN).

This sequence belongs to the acyl-CoA dehydrogenase family. As to quaternary structure, homotetramer. FAD is required as a cofactor.

The catalysed reaction is 2-methylbutanoyl-CoA + oxidized [electron-transfer flavoprotein] + H(+) = (2E)-2-methylbut-2-enoyl-CoA + reduced [electron-transfer flavoprotein]. It functions in the pathway lipid metabolism; mitochondrial fatty acid beta-oxidation. The protein operates within amino-acid degradation; L-isoleucine degradation. In terms of biological role, probable short and branched chain specific acyl-CoA dehydrogenase that catalyzes the removal of one hydrogen from C-2 and C-3 of the fatty acyl-CoA thioester, resulting in the formation of trans-2-enoyl-CoA. In Dictyostelium discoideum (Social amoeba), this protein is Probable short/branched chain specific acyl-CoA dehydrogenase (acadsb).